The following is a 174-amino-acid chain: NADH-quinone oxidoreductase subunit B 2 (174 aa).

4 residues coordinate [4Fe-4S] cluster: cysteine 38, cysteine 39, cysteine 104, and cysteine 133.

The protein belongs to the complex I 20 kDa subunit family. NDH-1 is composed of 14 different subunits. Subunits NuoB, C, D, E, F, and G constitute the peripheral sector of the complex. It depends on [4Fe-4S] cluster as a cofactor.

Its subcellular location is the cell membrane. The enzyme catalyses a quinone + NADH + 5 H(+)(in) = a quinol + NAD(+) + 4 H(+)(out). Its function is as follows. NDH-1 shuttles electrons from NADH, via FMN and iron-sulfur (Fe-S) centers, to quinones in the respiratory chain. The immediate electron acceptor for the enzyme in this species is believed to be ubiquinone. Couples the redox reaction to proton translocation (for every two electrons transferred, four hydrogen ions are translocated across the cytoplasmic membrane), and thus conserves the redox energy in a proton gradient. This chain is NADH-quinone oxidoreductase subunit B 2, found in Chloroflexus aurantiacus (strain ATCC 29366 / DSM 635 / J-10-fl).